The chain runs to 1531 residues: Multidrug resistance-associated protein 1 (1531 aa).

Residues 1–33 (MALRGFCSADGSDPLWDWNVTWYTSNPDFTKCF) are Extracellular-facing. N19 is a glycosylation site (N-linked (GlcNAc...) asparagine). A helical membrane pass occupies residues 34 to 54 (QNTVLVWVPCFYLWACFPFYF). The Cytoplasmic segment spans residues 55-74 (LYLSRHDRGYIQMTLLNKTK). Residues 75 to 95 (TALGFLLWIVCWADLFYSFWE) form a helical membrane-spanning segment. The Extracellular segment spans residues 96–100 (RSRGI). A helical transmembrane segment spans residues 101–121 (FLAPVFLVSPTLLGITMLLAT). At 122–133 (FLIQLERRKGVQ) the chain is on the cytoplasmic side. Residues 134 to 154 (SSGIMLTFWLVALLCALAILR) traverse the membrane as a helical segment. The Extracellular portion of the chain corresponds to 155-172 (SKIMTALKEDVQVDLFRD). Residues 173–193 (MTFYVYFSLVLIQLVLSCFSD) form a helical membrane-spanning segment. Over 194–316 (RSPLFSETIH…KEWNPSLFKV (123 aa)) the chain is Cytoplasmic. Phosphotyrosine is present on Y277. S289 carries the post-translational modification Phosphoserine. A helical membrane pass occupies residues 317-337 (LYKTFGPYFLMSFFFKAIHDL). The ABC transmembrane type-1 1 domain occupies 325 to 608 (FLMSFFFKAI…LPMVISSIVQ (284 aa)). Residues 338–363 (MMFSGPEILKLLINFVNDTKAPDWQG) are Extracellular-facing. A helical membrane pass occupies residues 364–384 (YFYTALLFVAACLQTLVLHQY). At 385–440 (FHICFVSGMRIKTAVIGAVYRKALVITNAARKSSTVGEIVNLMSVDAQRFMDLATY) the chain is on the cytoplasmic side. The helical transmembrane segment at 441–461 (INMIWSAPLQVILALYLLWRN) threads the bilayer. Topologically, residues 462–464 (LGP) are extracellular. Residues 465–485 (PILAGVAVMVLMVPVNAVMAM) form a helical membrane-spanning segment. Topologically, residues 486–547 (KTKTYQVAHM…VLKKSAYLAA (62 aa)) are cytoplasmic. K503 carries the N6-succinyllysine modification. The helical transmembrane segment at 548-568 (VGTFTWVCTPFLVALCTFAVY) threads the bilayer. Residues 569 to 590 (VTIDKNNVLDAQKAFVSLALFN) are Extracellular-facing. A helical transmembrane segment spans residues 591-611 (ILRFPLNILPMVISSIVQASV). At 612–967 (SLKRLRIFLS…VKLSVYWDYM (356 aa)) the chain is on the cytoplasmic side. Positions 644-868 (ITVRNATFTW…DGAFAEFLRT (225 aa)) constitute an ABC transporter 1 domain. Residue 678 to 685 (GQVGCGKS) participates in ATP binding. The segment at 871–893 (SAEQEQDPEDNGVTGVSGPGKEA) is disordered. A phosphoserine mark is found at S905, S915, and S930. Residues 917–938 (SSSYSGDVSRQHNSTAELQKDG) form a disordered region. Residues 922–933 (GDVSRQHNSTAE) are compositionally biased toward polar residues. The helical transmembrane segment at 968–988 (KAIGLFISFLSIFLFICNHVA) threads the bilayer. An ABC transmembrane type-1 2 domain is found at 975–1256 (SFLSIFLFIC…LVRMSSEMET (282 aa)). Over 989–1025 (ALASNYWLSLWTDDPIVNGTQEHTKVRLSVYGALGIS) the chain is Extracellular. N-linked (GlcNAc...) asparagine glycosylation is present at N1006. The helical transmembrane segment at 1026-1046 (QGIAVFGYSMAVSIGGILASR) threads the bilayer. Residues 1047–1089 (CLHVDLLHSILRSPMSFFERTPSGNLVNRFSKELDTVDSMIPE) are Cytoplasmic-facing. The helical transmembrane segment at 1090–1110 (VIKMFMGSLFNVIGACIVILL) threads the bilayer. Position 1111 (A1111) is a topological domain, extracellular. Residues 1112–1132 (TPIAAIIIPPLGLIYFFVQRF) form a helical membrane-spanning segment. At 1133–1203 (YVASSRQLKR…VANRWLAVRL (71 aa)) the chain is on the cytoplasmic side. The helical transmembrane segment at 1204–1224 (ECVGNCIVLFAALFAVISRHS) threads the bilayer. The Extracellular segment spans residues 1225–1226 (LS). The chain crosses the membrane as a helical span at residues 1227-1247 (AGLVGLSVSYSLQVTTYLNWL). The Cytoplasmic segment spans residues 1248 to 1531 (VRMSSEMETN…YNMARDAGLV (284 aa)). In terms of domain architecture, ABC transporter 2 spans 1293–1527 (VEFRNYCLRY…RGLFYNMARD (235 aa)). 1327 to 1334 (GRTGAGKS) contacts ATP.

Belongs to the ABC transporter superfamily. ABCC family. Conjugate transporter (TC 3.A.1.208) subfamily.

The protein resides in the cell membrane. The protein localises to the basolateral cell membrane. The enzyme catalyses ATP + H2O + xenobioticSide 1 = ADP + phosphate + xenobioticSide 2.. It catalyses the reaction an S-substituted glutathione(in) + ATP + H2O = an S-substituted glutathione(out) + ADP + phosphate + H(+). The catalysed reaction is sphing-4-enine 1-phosphate(in) + ATP + H2O = sphing-4-enine 1-phosphate(out) + ADP + phosphate + H(+). It carries out the reaction leukotriene C4(in) + ATP + H2O = leukotriene C4(out) + ADP + phosphate + H(+). The enzyme catalyses 17beta-estradiol 17-O-(beta-D-glucuronate)(in) + ATP + H2O = 17beta-estradiol 17-O-(beta-D-glucuronate)(out) + ADP + phosphate + H(+). It catalyses the reaction daunorubicin(in) + ATP + H2O = daunorubicin(out) + ADP + phosphate + H(+). The catalysed reaction is vincristine(in) + ATP + H2O = vincristine(out) + ADP + phosphate + H(+). It carries out the reaction 2',3'-cGAMP(in) + ATP + H2O = 2',3'-cGAMP(out) + ADP + phosphate + H(+). The enzyme catalyses S-[(2E,6E,10E)-geranylgeranyl]-L-glutathione(in) + ATP + H2O = S-[(2E,6E,10E)-geranylgeranyl]-L-glutathione(out) + ADP + phosphate + H(+). It catalyses the reaction prostaglandin A2-S-(R)-glutathione(in) + ATP + H2O = prostaglandin A2-S-(R)-glutathione(out) + ADP + phosphate + H(+). The catalysed reaction is prostaglandin A2-S-(S)-glutathione(in) + ATP + H2O = prostaglandin A2-S-(S)-glutathione(out) + ADP + phosphate + H(+). Its activity is regulated as follows. MK 571 inhibits sphingosine 1-phosphate and leukotriene C4 export. In terms of biological role, mediates export of organic anions and drugs from the cytoplasm. Mediates ATP-dependent transport of glutathione and glutathione conjugates, leukotriene C4, estradiol-17-beta-o-glucuronide, methotrexate, antiviral drugs and other xenobiotics. Confers resistance to anticancer drugs by decreasing accumulation of drug in cells, and by mediating ATP- and GSH-dependent drug export. Hydrolyzes ATP with low efficiency. Catalyzes the export of sphingosine 1-phosphate from mast cells independently of their degranulation. Participates in inflammatory response by allowing export of leukotriene C4 from leukotriene C4-synthesizing cells. Mediates ATP-dependent, GSH-independent cyclic GMP-AMP (cGAMP) export. Thus, by limiting intracellular cGAMP concentrations negatively regulates the cGAS-STING pathway. Exports S-geranylgeranyl-glutathione (GGG) in lymphoid cells and stromal compartments of lymphoid organs. ABCC1 (via extracellular transport) with GGT5 (via GGG catabolism) establish GGG gradients within lymphoid tissues to position P2RY8-positive lymphocytes at germinal centers in lymphoid follicles and restrict their chemotactic transmigration from blood vessels to the bone marrow parenchyma. Mediates basolateral export of GSH-conjugated R- and S-prostaglandin A2 diastereomers in polarized epithelial cells. The protein is Multidrug resistance-associated protein 1 of Macaca fascicularis (Crab-eating macaque).